A 1506-amino-acid chain; its full sequence is Phosphatidylinositol 3-kinase C2 domain-containing subunit gamma (1506 aa).

Residues 1 to 34 (MAYSWQTEPNRTEPQEDGSDTQQFHHTNQHLSSR) are disordered. Positions 20–34 (DTQQFHHTNQHLSSR) are enriched in polar residues. The PI3K-RBD domain maps to 285 to 371 (DTKFRVKISI…IQLHLQKNRD (87 aa)). Positions 541–689 (LQSHLSFTVC…SPLTLQIDFP (149 aa)) constitute a C2 PI3K-type domain. One can recognise a PIK helical domain in the interval 704–880 (RTDHEEPPRE…QELLAALQFC (177 aa)). Positions 949–1227 (DRDACSYFTS…KIKESLECFP (279 aa)) constitute a PI3K/PI4K catalytic domain. Positions 955-961 (YFTSNAS) are G-loop. The segment at 1091 to 1099 (GVCDRHNDN) is catalytic loop. Positions 1110 to 1136 (HIDFGKFLGHAQTFGGIKRDRAPFIFT) are activation loop. One can recognise a PX domain in the interval 1260 to 1372 (LNKTRTIQRV…SFFLSEHIQP (113 aa)). Positions 1381-1506 (DPGENSLDKS…KWYPLGNSII (126 aa)) constitute a C2 domain.

This sequence belongs to the PI3/PI4-kinase family. Expressed predominantly in liver. Also found in kidney, lung and lymphoid tissue. Down-regulated in BeF3 cells expressing the BCR-ABL oncogene p185.

Its subcellular location is the membrane. The catalysed reaction is a 1,2-diacyl-sn-glycero-3-phospho-(1D-myo-inositol 4-phosphate) + ATP = a 1,2-diacyl-sn-glycero-3-phospho-(1D-myo-inositol-3,4-bisphosphate) + ADP + H(+). It carries out the reaction a 1,2-diacyl-sn-glycero-3-phospho-(1D-myo-inositol) + ATP = a 1,2-diacyl-sn-glycero-3-phospho-(1D-myo-inositol-3-phosphate) + ADP + H(+). Generates phosphatidylinositol 3-phosphate (PtdIns3P) and phosphatidylinositol 3,4-bisphosphate (PtdIns(3,4)P2) that act as second messengers. May play a role in SDF1A-stimulated chemotaxis. This chain is Phosphatidylinositol 3-kinase C2 domain-containing subunit gamma (Pik3c2g), found in Mus musculus (Mouse).